A 245-amino-acid chain; its full sequence is 1-(5-phosphoribosyl)-5-[(5-phosphoribosylamino)methylideneamino] imidazole-4-carboxamide isomerase (245 aa).

Aspartate 8 acts as the Proton acceptor in catalysis. Aspartate 130 serves as the catalytic Proton donor.

It belongs to the HisA/HisF family.

It localises to the cytoplasm. It carries out the reaction 1-(5-phospho-beta-D-ribosyl)-5-[(5-phospho-beta-D-ribosylamino)methylideneamino]imidazole-4-carboxamide = 5-[(5-phospho-1-deoxy-D-ribulos-1-ylimino)methylamino]-1-(5-phospho-beta-D-ribosyl)imidazole-4-carboxamide. It participates in amino-acid biosynthesis; L-histidine biosynthesis; L-histidine from 5-phospho-alpha-D-ribose 1-diphosphate: step 4/9. The polypeptide is 1-(5-phosphoribosyl)-5-[(5-phosphoribosylamino)methylideneamino] imidazole-4-carboxamide isomerase (Pseudomonas putida (strain GB-1)).